The chain runs to 773 residues: ATP-dependent permease MDL2, mitochondrial (773 aa).

The transit peptide at Met-1–Ser-90 directs the protein to the mitochondrion. Residues Pro-73 to Ser-84 are compositionally biased toward polar residues. Residues Pro-73–Glu-95 form a disordered region. The ABC transmembrane type-1 domain maps to Leu-119–Gln-413. A run of 3 helical transmembrane segments spans residues Ile-123–Val-143, Phe-170–Leu-192, and Val-257–Phe-277. Residue Gly-481–Ser-488 coordinates ATP. The 241-residue stretch at Leu-493–Asp-733 folds into the ABC transporter domain. Composition is skewed to basic and acidic residues over residues Lys-706–Asp-733 and Glu-740–Lys-762. The interval Lys-706 to Pro-773 is disordered.

The protein belongs to the ABC transporter superfamily. ABCB family. Mitochondrial peptide exporter (TC 3.A.1.212) subfamily.

It localises to the mitochondrion inner membrane. The protein is ATP-dependent permease MDL2, mitochondrial (MDL2) of Saccharomyces cerevisiae (strain ATCC 204508 / S288c) (Baker's yeast).